Here is a 185-residue protein sequence, read N- to C-terminus: Putative manganese efflux pump MntP (185 aa).

6 helical membrane passes run Ile-3–Ala-23, Leu-40–Ile-60, Phe-64–Ile-84, Thr-102–Ile-122, Leu-124–Ile-144, and Glu-165–Met-185.

Belongs to the MntP (TC 9.B.29) family.

The protein resides in the cell inner membrane. Its function is as follows. Probably functions as a manganese efflux pump. This Elusimicrobium minutum (strain Pei191) protein is Putative manganese efflux pump MntP.